Consider the following 118-residue polypeptide: Large ribosomal subunit protein bL19 (118 aa).

This sequence belongs to the bacterial ribosomal protein bL19 family.

In terms of biological role, this protein is located at the 30S-50S ribosomal subunit interface and may play a role in the structure and function of the aminoacyl-tRNA binding site. The polypeptide is Large ribosomal subunit protein bL19 (Coprothermobacter proteolyticus (strain ATCC 35245 / DSM 5265 / OCM 4 / BT)).